Here is a 229-residue protein sequence, read N- to C-terminus: RNA pyrophosphohydrolase (229 aa).

The Nudix hydrolase domain occupies 6-149 (GFRPNVGIIL…KRGVYEMALT (144 aa)). The short motif at 38 to 59 (GGIDRGETPEQAMFRELHEEVG) is the Nudix box element. The disordered stretch occupies residues 168–229 (SGMRPREAHE…QVLHPDPGKA (62 aa)).

The protein belongs to the Nudix hydrolase family. RppH subfamily. A divalent metal cation serves as cofactor.

Accelerates the degradation of transcripts by removing pyrophosphate from the 5'-end of triphosphorylated RNA, leading to a more labile monophosphorylated state that can stimulate subsequent ribonuclease cleavage. The protein is RNA pyrophosphohydrolase of Delftia acidovorans (strain DSM 14801 / SPH-1).